An 823-amino-acid polypeptide reads, in one-letter code: Ankyrin repeat domain-containing protein 20B (823 aa).

ANK repeat units lie at residues 32 to 65 (SELQ…ARDK), 66 to 95 (QHRT…QIDI), 99 to 128 (ENRT…NPNL), 132 to 161 (YGNT…HIEA), 165 to 194 (DSNT…STHA), and 198 to 227 (LRRS…DVFA). Disordered stretches follow at residues 302–343 (PEKV…GVED) and 355–401 (VQTL…QLSE). Residues 372–382 (QERHERSEKKQ) show a composition bias toward basic and acidic residues. Coiled-coil stretches lie at residues 431 to 480 (KKLK…KQLE), 565 to 724 (EMIT…NNST), and 776 to 805 (LVLE…EKAE).

The sequence is that of Ankyrin repeat domain-containing protein 20B (ANKRD20A8P) from Homo sapiens (Human).